The chain runs to 398 residues: MTLAAAAQLEKTPLETYVPPAKPSLIGLSRAELAERLGHIGVAPAQRKMRAQQLWNWMYLRGARDFSEMTNVSKEMRAQLSDHFTVDRPEVVAEQISNDGTRKWLLRLPSGDDVQKAHEVECVYIPETDRGTLCVSSQVGCTLNCSFCHTGTQRLVRNLTAGEIIGQVMVARDRLNDWVDRETPNGNRLVTNIVMMGMGEPLYNFEAVRDALLIVTDNEGIGISRRRVTLSTSGVVPNIIRTGEEIGVMLAISLHAVRDELRDELVPLNRKYPLKELLQACRDYPGASNARRITFEYVMLKGVNDSLDDARRLVQLLKGIPAKINLIPFNPWPGSAYECSDWDQIEKFSEYIFNAGYSSPVRTPRGRDILAACGQLKSETEKLSVRERDALRAMAMTD.

The Proton acceptor role is filled by glutamate 121. The region spanning 127 to 370 (ETDRGTLCVS…VRTPRGRDIL (244 aa)) is the Radical SAM core domain. A disulfide bond links cysteine 134 and cysteine 373. Cysteine 141, cysteine 145, and cysteine 148 together coordinate [4Fe-4S] cluster. Residues 199 to 200 (GE), serine 231, 253 to 255 (SLH), and asparagine 330 each bind S-adenosyl-L-methionine. The S-methylcysteine intermediate role is filled by cysteine 373.

The protein belongs to the radical SAM superfamily. RlmN family. Requires [4Fe-4S] cluster as cofactor.

The protein localises to the cytoplasm. It carries out the reaction adenosine(2503) in 23S rRNA + 2 reduced [2Fe-2S]-[ferredoxin] + 2 S-adenosyl-L-methionine = 2-methyladenosine(2503) in 23S rRNA + 5'-deoxyadenosine + L-methionine + 2 oxidized [2Fe-2S]-[ferredoxin] + S-adenosyl-L-homocysteine. The enzyme catalyses adenosine(37) in tRNA + 2 reduced [2Fe-2S]-[ferredoxin] + 2 S-adenosyl-L-methionine = 2-methyladenosine(37) in tRNA + 5'-deoxyadenosine + L-methionine + 2 oxidized [2Fe-2S]-[ferredoxin] + S-adenosyl-L-homocysteine. Its function is as follows. Specifically methylates position 2 of adenine 2503 in 23S rRNA and position 2 of adenine 37 in tRNAs. m2A2503 modification seems to play a crucial role in the proofreading step occurring at the peptidyl transferase center and thus would serve to optimize ribosomal fidelity. The chain is Dual-specificity RNA methyltransferase RlmN from Rhodopseudomonas palustris (strain BisB5).